Here is a 251-residue protein sequence, read N- to C-terminus: Vitamin B12 import ATP-binding protein BtuD (251 aa).

The ABC transporter domain maps to 2 to 236 (IRVNSLQVDS…EVLQSVFGTS (235 aa)). 30-37 (GPNGCGKS) lines the ATP pocket.

It belongs to the ABC transporter superfamily. Vitamin B12 importer (TC 3.A.1.13.1) family. In terms of assembly, the complex is composed of two ATP-binding proteins (BtuD), two transmembrane proteins (BtuC) and a solute-binding protein (BtuF).

The protein localises to the cell inner membrane. It carries out the reaction an R-cob(III)alamin(out) + ATP + H2O = an R-cob(III)alamin(in) + ADP + phosphate + H(+). Its function is as follows. Part of the ABC transporter complex BtuCDF involved in vitamin B12 import. Responsible for energy coupling to the transport system. In Vibrio cholerae serotype O1 (strain ATCC 39541 / Classical Ogawa 395 / O395), this protein is Vitamin B12 import ATP-binding protein BtuD.